Here is an 84-residue protein sequence, read N- to C-terminus: MYB-like transcription factor TCL1 (84 aa).

A Myb-like domain is found at 36 to 73 (TEQEEDLIFRMYRLVGDRWDLIARRVVGREAKEIERYW).

In terms of tissue distribution, expressed in inflorescences and trichomes of rosette and cauline leaves.

The protein localises to the nucleus. Functionally, MYB-type transcription factor involved in trichome cell specification. Acts as a negative regulator of trichome patterning and formation by direct binding to the cis-acting regulatory elements of GL1, thus suppressing the expression of GL1. In Arabidopsis thaliana (Mouse-ear cress), this protein is MYB-like transcription factor TCL1 (TCL1).